The sequence spans 156 residues: Small ribosomal subunit protein uS7 (156 aa).

It belongs to the universal ribosomal protein uS7 family. As to quaternary structure, part of the 30S ribosomal subunit. Contacts proteins S9 and S11.

Functionally, one of the primary rRNA binding proteins, it binds directly to 16S rRNA where it nucleates assembly of the head domain of the 30S subunit. Is located at the subunit interface close to the decoding center, probably blocks exit of the E-site tRNA. The sequence is that of Small ribosomal subunit protein uS7 from Clavibacter sepedonicus (Clavibacter michiganensis subsp. sepedonicus).